Consider the following 239-residue polypeptide: MNQTPLRLLIHGASGRMGQALLRLAAEHPESLQIVAAVTGRAPAQRVVDGVPFFAASELPGAPAFDVAIDFSLPEGFDPLLALCVERGAGLVSGTTGISSSQRQALEAAAASIPLVWASNFSLGVAVLDELVERAAQALAGWDCDIVESHHTQKKDAPSGTALTLGAAAQRGGAEPHYASLRAGDIVGEHLVQFTGLGERIELVHRATNRDIFARGALFAARQLQGRAPGSYRVRDLLQ.

Residues 12–17 (GASGRM), 94–96 (GTT), and 118–121 (ASNF) contribute to the NAD(+) site. The active-site Proton donor/acceptor is His150. Position 151 (His151) interacts with (S)-2,3,4,5-tetrahydrodipicolinate. The Proton donor role is filled by Lys154. 160–161 (GT) is a binding site for (S)-2,3,4,5-tetrahydrodipicolinate.

This sequence belongs to the DapB family.

It localises to the cytoplasm. It catalyses the reaction (S)-2,3,4,5-tetrahydrodipicolinate + NAD(+) + H2O = (2S,4S)-4-hydroxy-2,3,4,5-tetrahydrodipicolinate + NADH + H(+). It carries out the reaction (S)-2,3,4,5-tetrahydrodipicolinate + NADP(+) + H2O = (2S,4S)-4-hydroxy-2,3,4,5-tetrahydrodipicolinate + NADPH + H(+). The protein operates within amino-acid biosynthesis; L-lysine biosynthesis via DAP pathway; (S)-tetrahydrodipicolinate from L-aspartate: step 4/4. Catalyzes the conversion of 4-hydroxy-tetrahydrodipicolinate (HTPA) to tetrahydrodipicolinate. In Stenotrophomonas maltophilia (strain R551-3), this protein is 4-hydroxy-tetrahydrodipicolinate reductase.